Here is a 135-residue protein sequence, read N- to C-terminus: ARGOS-like protein (135 aa).

The organ Size Related (OSR) domain stretch occupies residues 71-122 (FSLESMVVLVGLTASLLILPLILPPLPPPPFMLLLIPIGIMVLLMVLAFMPS). Helical transmembrane passes span 76 to 96 (MVVL…LPPL) and 100 to 120 (PFML…LAFM).

The protein belongs to the plant organ size related (OSR) protein family. As to expression, expressed in cotyledons, roots, flowers, siliques and leaves.

The protein resides in the membrane. It is found in the nucleus. The protein localises to the cytoplasm. Its subcellular location is the endoplasmic reticulum. Its function is as follows. Promotes cell expansion-dependent organ growth, probably via a brassinosteroids signaling pathway. Acts downstream of BRI1. The protein is ARGOS-like protein (ARL) of Arabidopsis thaliana (Mouse-ear cress).